The sequence spans 99 residues: Carboxysome shell vertex protein CcmL (99 aa).

A BMV domain is found at 1 to 83 (MRIAKVRGTV…VDAAVIAIID (83 aa)).

The protein belongs to the CcmL/EutN family. CcmL subfamily. In terms of assembly, homopentamer. Interacts with full-length CcmM.

It localises to the carboxysome. Probably forms vertices in the carboxysome, a polyhedral inclusion where RuBisCO (ribulose bisphosphate carboxylase, rbcL-rbcS) is sequestered. Has been modeled to induce curvature upon insertion into an otherwise flat hexagonal molecular layer of CcmK subunits. In terms of biological role, beta-carboxysome assembly initiates when soluble RuBisCO is condensed into a liquid matrix in a pre-carboxysome by the RbcS-like domains of probably both CcmM58 and CcmM35. CcmN interacts with the N-terminus of CcmM58, and then recruits the CcmK2 major shell protein via CcmN's encapsulation peptide. Shell formation requires CcmK proteins and CcmO. CcmL caps the otherwise elongated carboxysome. Once fully encapsulated carboxysomes are formed, they migrate within the cell probably via interactions with the cytoskeleton. The protein is Carboxysome shell vertex protein CcmL of Synechococcus elongatus (strain ATCC 33912 / PCC 7942 / FACHB-805) (Anacystis nidulans R2).